The following is a 79-amino-acid chain: Small ribosomal subunit protein bS18 (79 aa).

Belongs to the bacterial ribosomal protein bS18 family. As to quaternary structure, part of the 30S ribosomal subunit. Forms a tight heterodimer with protein bS6.

Its function is as follows. Binds as a heterodimer with protein bS6 to the central domain of the 16S rRNA, where it helps stabilize the platform of the 30S subunit. The protein is Small ribosomal subunit protein bS18 of Streptococcus agalactiae serotype Ia (strain ATCC 27591 / A909 / CDC SS700).